The chain runs to 205 residues: Recombination protein RecR (205 aa).

The segment at 59–74 adopts a C4-type zinc-finger fold; the sequence is CARCNTFCEGGLCDIC. Residues 82–177 enclose the Toprim domain; the sequence is RRLMVVHMPA…KVSRLSQGIP (96 aa).

It belongs to the RecR family.

May play a role in DNA repair. It seems to be involved in an RecBC-independent recombinational process of DNA repair. It may act with RecF and RecO. The protein is Recombination protein RecR of Neisseria gonorrhoeae (strain ATCC 700825 / FA 1090).